The chain runs to 250 residues: Thioesterase FPSE_09186 (250 aa).

It belongs to the AMT4 thioesterase family.

The protein operates within secondary metabolite biosynthesis. In terms of biological role, thioesterase; part of the gene cluster that mediates the biosynthesis of the lipopeptides W493 A and B. W493 A and B consist of six amino acid residues D-allo-thr, L-Ala, D-Ala, L-Gln, D-Tyr, and L-Val/L-Ile linked to a 3-hydroxy-4-methyltetradecanoic acid polyketide chain. The biosynthesis starts with formation of the linear polyketide chain by the highly reducing polyketide synthase PKS40. The gene cluster contains a putative acyl-CoA ligase (FPSE_09184) for formation of a CoA thioester polyketide. The thiol bond could be hydrolyzed by the putative thioesterase (FPSE_09186) and then accepted by the first T domain in module 1 of NRPS32. The second T domain is responsible for accepting a threonine, which is adenylated by the A domain and epimerized to the D-allo-threonine formed by the E domain. The five successive modules incorporate Ala, Ala, Gln, Tyr, and Val/Ile into the final product, which is released by cyclization. The sequence is that of Thioesterase FPSE_09186 from Fusarium pseudograminearum (strain CS3096) (Wheat and barley crown-rot fungus).